A 200-amino-acid chain; its full sequence is Molybdenum cofactor guanylyltransferase (200 aa).

GTP is bound by residues 15-17 (LAG), Lys28, Asp74, and Asp104. Asp104 provides a ligand contact to Mg(2+).

It belongs to the MobA family. Monomer. The cofactor is Mg(2+).

The protein resides in the cytoplasm. It catalyses the reaction Mo-molybdopterin + GTP + H(+) = Mo-molybdopterin guanine dinucleotide + diphosphate. Its function is as follows. Transfers a GMP moiety from GTP to Mo-molybdopterin (Mo-MPT) cofactor (Moco or molybdenum cofactor) to form Mo-molybdopterin guanine dinucleotide (Mo-MGD) cofactor. The polypeptide is Molybdenum cofactor guanylyltransferase (Pseudomonas fluorescens (strain Pf0-1)).